A 215-amino-acid polypeptide reads, in one-letter code: Beta-crystallin A3 (215 aa).

N-acetylmethionine is present on methionine 1. Over residues 1–16 the composition is skewed to low complexity; it reads METQAEQQELETLPTT. Residues 1–29 form a disordered region; sequence METQAEQQELETLPTTKMAQTNPTPGSLG. Residues 1–30 are N-terminal arm; that stretch reads METQAEQQELETLPTTKMAQTNPTPGSLGP. An N-acetylalanine modification is found at glutamate 2. Beta/gamma crystallin 'Greek key' domains follow at residues 31-70 and 71-117; these read WKITIYDQENFQGKRMEFTSSCPNVSERSFDNVRSLKVES and GAWI…RPIC. 2 positions are modified to S-glutathionyl cysteine; alternate: cysteine 82 and cysteine 117. S-methylcysteine; alternate is present on residues cysteine 82 and cysteine 117. The connecting peptide stretch occupies residues 118–123; that stretch reads SANHKE. Beta/gamma crystallin 'Greek key' domains are found at residues 124 to 165 and 166 to 214; these read SKMT…KIQS and GAWV…RRIQ. The residue at position 185 (cysteine 185) is an S-methylcysteine.

Belongs to the beta/gamma-crystallin family. Homo/heterodimer, or complexes of higher-order. The structure of beta-crystallin oligomers seems to be stabilized through interactions between the N-terminal arms. Interacts with CRYBA1. Specific cleavages in the N-terminal arm occur during lens maturation and give rise to several truncated forms. Cleavages do not seem to have adverse effects on solubility. Post-translationally, S-methylation and glutathionylation occur in normal young lenses and do not seem to be detrimental.

Crystallins are the dominant structural components of the vertebrate eye lens. The protein is Beta-crystallin A3 of Homo sapiens (Human).